We begin with the raw amino-acid sequence, 835 residues long: Phenylalanine--tRNA ligase beta subunit (835 aa).

A tRNA-binding domain is found at 44 to 160; that stretch reads PATTGPLVLG…ESGQPGDDAR (117 aa). The B5 domain occupies 419–494; that stretch reads PTMPSITMPV…RLEGLEAIPT (76 aa). Positions 472, 478, 481, and 482 each coordinate Mg(2+). In terms of domain architecture, FDX-ACB spans 741–834; that stretch reads SAFPALHQDI…AKERLGAEMR (94 aa).

The protein belongs to the phenylalanyl-tRNA synthetase beta subunit family. Type 1 subfamily. In terms of assembly, tetramer of two alpha and two beta subunits. Mg(2+) is required as a cofactor.

It is found in the cytoplasm. The catalysed reaction is tRNA(Phe) + L-phenylalanine + ATP = L-phenylalanyl-tRNA(Phe) + AMP + diphosphate + H(+). The chain is Phenylalanine--tRNA ligase beta subunit from Corynebacterium efficiens (strain DSM 44549 / YS-314 / AJ 12310 / JCM 11189 / NBRC 100395).